Reading from the N-terminus, the 152-residue chain is Probable ribose-5-phosphate isomerase B (152 aa).

Position 12–13 (12–13 (DH)) interacts with D-ribulose 5-phosphate. The active-site Proton acceptor is the cysteine 70. D-ribulose 5-phosphate is bound at residue 71–75 (GTGVG). Histidine 103 functions as the Proton donor in the catalytic mechanism. Positions 104, 114, 137, and 141 each coordinate D-ribulose 5-phosphate.

This sequence belongs to the LacAB/RpiB family. In terms of assembly, homodimer.

It catalyses the reaction aldehydo-D-ribose 5-phosphate = D-ribulose 5-phosphate. It participates in carbohydrate degradation; pentose phosphate pathway; D-ribose 5-phosphate from D-ribulose 5-phosphate (non-oxidative stage): step 1/1. Catalyzes the interconversion of ribulose-5-P and ribose-5-P. This Mycoplasma pneumoniae (strain ATCC 29342 / M129 / Subtype 1) (Mycoplasmoides pneumoniae) protein is Probable ribose-5-phosphate isomerase B.